A 243-amino-acid polypeptide reads, in one-letter code: Flavin-dependent thymidylate synthase (243 aa).

The ThyX domain occupies 2–207; it reads VKVKLINYTP…ELKPIIEWAK (206 aa). Residues Ser-56, 80–82, and Gln-88 contribute to the FAD site; that span reads RHR. DUMP contacts are provided by residues 77–80, 88–92, and Arg-146; these read QLVR and QQSQR. The ThyX motif motif lies at 80–90; that stretch reads RHRIASYTQQS. Residues 162-164 and His-168 contribute to the FAD site; that span reads NLR. Arg-173 contacts dUMP. Arg-173 (involved in ionization of N3 of dUMP, leading to its activation) is an active-site residue.

It belongs to the thymidylate synthase ThyX family. Homotetramer. FAD serves as cofactor.

It carries out the reaction dUMP + (6R)-5,10-methylene-5,6,7,8-tetrahydrofolate + NADPH + H(+) = dTMP + (6S)-5,6,7,8-tetrahydrofolate + NADP(+). It participates in pyrimidine metabolism; dTTP biosynthesis. Functionally, catalyzes the reductive methylation of 2'-deoxyuridine-5'-monophosphate (dUMP) to 2'-deoxythymidine-5'-monophosphate (dTMP) while utilizing 5,10-methylenetetrahydrofolate (mTHF) as the methyl donor, and NADPH and FADH(2) as the reductant. The sequence is that of Flavin-dependent thymidylate synthase from Pyrococcus horikoshii (strain ATCC 700860 / DSM 12428 / JCM 9974 / NBRC 100139 / OT-3).